Consider the following 264-residue polypeptide: 3-methyl-2-oxobutanoate hydroxymethyltransferase (264 aa).

2 residues coordinate Mg(2+): aspartate 45 and aspartate 84. Residues 45 to 46 (DS), aspartate 84, and lysine 112 contribute to the 3-methyl-2-oxobutanoate site. Glutamate 114 lines the Mg(2+) pocket. Catalysis depends on glutamate 181, which acts as the Proton acceptor.

Belongs to the PanB family. Homodecamer; pentamer of dimers. It depends on Mg(2+) as a cofactor.

The protein resides in the cytoplasm. It carries out the reaction 3-methyl-2-oxobutanoate + (6R)-5,10-methylene-5,6,7,8-tetrahydrofolate + H2O = 2-dehydropantoate + (6S)-5,6,7,8-tetrahydrofolate. It functions in the pathway cofactor biosynthesis; (R)-pantothenate biosynthesis; (R)-pantoate from 3-methyl-2-oxobutanoate: step 1/2. Functionally, catalyzes the reversible reaction in which hydroxymethyl group from 5,10-methylenetetrahydrofolate is transferred onto alpha-ketoisovalerate to form ketopantoate. The sequence is that of 3-methyl-2-oxobutanoate hydroxymethyltransferase from Shewanella pealeana (strain ATCC 700345 / ANG-SQ1).